The sequence spans 313 residues: Ornithine carbamoyltransferase (313 aa).

Carbamoyl phosphate contacts are provided by residues Ser61–Thr64, Gln88, Arg112, and His139–Gln142. L-ornithine is bound by residues Asn170, Asp228, and Ser232–Met233. Residues Cys268 to Leu269 and Arg296 each bind carbamoyl phosphate.

It belongs to the aspartate/ornithine carbamoyltransferase superfamily. OTCase family.

The protein resides in the cytoplasm. The catalysed reaction is carbamoyl phosphate + L-ornithine = L-citrulline + phosphate + H(+). Its pathway is amino-acid biosynthesis; L-arginine biosynthesis; L-arginine from L-ornithine and carbamoyl phosphate: step 1/3. Reversibly catalyzes the transfer of the carbamoyl group from carbamoyl phosphate (CP) to the N(epsilon) atom of ornithine (ORN) to produce L-citrulline. In Bordetella avium (strain 197N), this protein is Ornithine carbamoyltransferase.